The chain runs to 505 residues: MEEFQGYLELDRSRQHYLLYPLLFREYIYAFAHDHGLNRSILFQNAGYDNKSSSIXXXXXXXXXXXXXXXXXXXXXXXQNQFFGHNKNLYSQILSEGFAVIVEIPFSLRFLFSLERKEIAKSYNLRSIHSIFSFLEDKFTHLDYVSDVLIPYHIHLEILVQTLRYWVKDASSLHLLRFFLHNYWNSFITPKKHITFFLKGNPRLFLFLYNSHICEYEYIFLFLRNQSSRLRSTSSGIFFERIHFYVKIEHFHFVKVFFDNNFQCILWFLKDPFMHYVRYQGKFFMASKDTPLLMNKWKCYLVNLWQYHFSVWFQPGRIDINQLCKYSLDFLGYRSSVRLNSSVVRSQMLENLFLINNAMKKFETIVPIIPLIGSLYKSNFCNTFGHPISKPSRTDSSDSDIIDRFLRICRNLSHYHSGSSKKKSLXRVKYILRLSCVKTLARKHKMTVRTFVKRLGSEFFEEFLTEEEVVFSLIFPRTYSTSRRLYRGQIWYLDITSINDLVNYE.

This sequence belongs to the intron maturase 2 family. MatK subfamily.

It is found in the plastid. The protein localises to the chloroplast. Its function is as follows. Usually encoded in the trnK tRNA gene intron. Probably assists in splicing its own and other chloroplast group II introns. This is Maturase K from Kunzea capitata (Pink kunzea).